A 189-amino-acid polypeptide reads, in one-letter code: UPF0398 protein lp_1753 (189 aa).

This sequence belongs to the UPF0398 family.

This is UPF0398 protein lp_1753 from Lactiplantibacillus plantarum (strain ATCC BAA-793 / NCIMB 8826 / WCFS1) (Lactobacillus plantarum).